The sequence spans 1032 residues: UPF0182 protein sll1060 (1032 aa).

The next 9 helical transmembrane spans lie at tryptophan 27 to valine 49, tryptophan 69 to phenylalanine 87, valine 144 to isoleucine 166, phenylalanine 197 to leucine 219, proline 226 to leucine 248, tryptophan 283 to leucine 300, histidine 321 to leucine 339, leucine 364 to valine 386, and isoleucine 406 to tryptophan 428.

It belongs to the UPF0182 family.

The protein localises to the cell membrane. This chain is UPF0182 protein sll1060, found in Synechocystis sp. (strain ATCC 27184 / PCC 6803 / Kazusa).